A 958-amino-acid chain; its full sequence is SLIT and NTRK-like protein 5 (958 aa).

The N-terminal stretch at 1–40 (MHTCCPPVTLEQDLHRKMHSWMLQTLAFAVTSLVLSCAET) is a signal peptide. Over 41-664 (IDYYGEICDN…GGGASSVPLS (624 aa)) the chain is Extracellular. LRR repeat units follow at residues 82–103 (PIYH…EFVN), 106–127 (GASI…AFHG), 130–151 (GLRR…TFLG), 154–175 (NLEY…AFGK), 178–199 (LLQV…LFRF), and 201–222 (PLTH…GLLQ). Asn103 is a glycosylation site (N-linked (GlcNAc...) asparagine). In terms of domain architecture, LRRCT 1 spans 235-286 (NPWNCSCELISLKDWLDSISYSALVGDVVCETPFRLHGRDLDEVSKQELCPR). Residues 317–358 (ATSSSAVYKPPLKPPKGTRQPNKPRVRPTSRQPSKDLGYSNY) are disordered. One can recognise an LRRNT domain in the interval 365 to 407 (QTKSPVPLECPTACSCNLQISDLGLNVNCQERKIESIAELQPK). LRR repeat units follow at residues 410-431 (NPKK…DFLE), 434-455 (GLDL…AFGD), 458-479 (NLRR…LFYG), 482-503 (SLQY…TFDP), 506-527 (NLQL…VFSG), and 529-550 (TLLR…GVLD). The LRRCT 2 domain maps to 563-614 (NPWDCTCDIVGMKLWVEQLKVGVLVDEVICKAPKKFAETDMRSIKSELLCPD). A glycan (N-linked (GlcNAc...) asparagine) is linked at Asn644. A helical membrane pass occupies residues 665-685 (VLILSLLLVFIMSVFVAAGLF). The Cytoplasmic segment spans residues 686-958 (VLVMKRRKKN…LEKQTTFSQF (273 aa)). The disordered stretch occupies residues 789–844 (NHHLQQQQQPPPPPQQPQQQPPPQLQLQPGEEERRESHHLRSPAYSVSTIEPREDL). Residues 797–812 (QPPPPPQQPQQQPPPQ) show a composition bias toward pro residues.

The protein belongs to the SLITRK family. Expressed predominantly in the cerebral cortex of the brain but also at low levels in the spinal cord and medulla.

The protein localises to the membrane. Suppresses neurite outgrowth. The chain is SLIT and NTRK-like protein 5 (SLITRK5) from Homo sapiens (Human).